The sequence spans 163 residues: Crossover junction endodeoxyribonuclease RuvC (163 aa).

Active-site residues include aspartate 9, glutamate 76, and aspartate 148. Residues aspartate 9, glutamate 76, and aspartate 148 each coordinate Mg(2+).

The protein belongs to the RuvC family. In terms of assembly, homodimer which binds Holliday junction (HJ) DNA. The HJ becomes 2-fold symmetrical on binding to RuvC with unstacked arms; it has a different conformation from HJ DNA in complex with RuvA. In the full resolvosome a probable DNA-RuvA(4)-RuvB(12)-RuvC(2) complex forms which resolves the HJ. It depends on Mg(2+) as a cofactor.

It is found in the cytoplasm. It carries out the reaction Endonucleolytic cleavage at a junction such as a reciprocal single-stranded crossover between two homologous DNA duplexes (Holliday junction).. Its function is as follows. The RuvA-RuvB-RuvC complex processes Holliday junction (HJ) DNA during genetic recombination and DNA repair. Endonuclease that resolves HJ intermediates. Cleaves cruciform DNA by making single-stranded nicks across the HJ at symmetrical positions within the homologous arms, yielding a 5'-phosphate and a 3'-hydroxyl group; requires a central core of homology in the junction. The consensus cleavage sequence is 5'-(A/T)TT(C/G)-3'. Cleavage occurs on the 3'-side of the TT dinucleotide at the point of strand exchange. HJ branch migration catalyzed by RuvA-RuvB allows RuvC to scan DNA until it finds its consensus sequence, where it cleaves and resolves the cruciform DNA. The polypeptide is Crossover junction endodeoxyribonuclease RuvC (Nostoc sp. (strain PCC 7120 / SAG 25.82 / UTEX 2576)).